Here is a 112-residue protein sequence, read N- to C-terminus: PTS system lactose-specific EIIA component (112 aa).

Residues 6-104 (EEISMVGFAL…TRYMIRMFKR (99 aa)) form the PTS EIIA type-3 domain. Catalysis depends on histidine 80, which acts as the Tele-phosphohistidine intermediate. A Phosphohistidine; by HPr modification is found at histidine 80. Mg(2+) is bound at residue aspartate 83.

Homotrimer. The cofactor is Mg(2+).

The protein resides in the cytoplasm. The phosphoenolpyruvate-dependent sugar phosphotransferase system (sugar PTS), a major carbohydrate active transport system, catalyzes the phosphorylation of incoming sugar substrates concomitantly with their translocation across the cell membrane. The enzyme II LacEF PTS system is involved in lactose transport. This Lacticaseibacillus casei (Lactobacillus casei) protein is PTS system lactose-specific EIIA component.